The primary structure comprises 123 residues: Small ribosomal subunit protein uS13 (123 aa).

The interval 97–123 is disordered; sequence PCRGQRTHTNSRTRKGPRRGVMAKKKK.

It belongs to the universal ribosomal protein uS13 family. Part of the 30S ribosomal subunit. Forms a loose heterodimer with protein S19. Forms two bridges to the 50S subunit in the 70S ribosome.

In terms of biological role, located at the top of the head of the 30S subunit, it contacts several helices of the 16S rRNA. In the 70S ribosome it contacts the 23S rRNA (bridge B1a) and protein L5 of the 50S subunit (bridge B1b), connecting the 2 subunits; these bridges are implicated in subunit movement. Contacts the tRNAs in the A and P-sites. The chain is Small ribosomal subunit protein uS13 from Solidesulfovibrio magneticus (strain ATCC 700980 / DSM 13731 / RS-1) (Desulfovibrio magneticus).